The primary structure comprises 258 residues: C1q-related factor (258 aa).

An N-terminal signal peptide occupies residues 1-16 (MLLVLVVLIPVLVSSG). The disordered stretch occupies residues 39–117 (GPGAGARTDG…PGLPGAGGSG (79 aa)). Over residues 67-77 (GPQGKPGRTGK) the composition is skewed to low complexity. Residues 67 to 115 (GPQGKPGRTGKPGPPGPPGDPGPPGPVGPPGEKGEPGKPGPPGLPGAGG) enclose the Collagen-like domain. Pro residues predominate over residues 78–95 (PGPPGPPGDPGPPGPVGP). The C1q domain maps to 125-258 (TTVPRVAFYA…TFSGFIIYSD (134 aa)).

In terms of assembly, interacts with ADGRB3. Forms heterooligomers with C1QL4, when proteins are coexpressed; this interaction does not occur after secretion. As to expression, expressed in brainstem.

Its subcellular location is the secreted. In terms of biological role, may regulate the number of excitatory synapses that are formed on hippocampus neurons. Has no effect on inhibitory synapses. The chain is C1q-related factor (C1QL1) from Homo sapiens (Human).